We begin with the raw amino-acid sequence, 343 residues long: Dihydroorotase (343 aa).

The Zn(2+) site is built by His13 and His15. Residues 15 to 17 and Asn41 each bind substrate; that span reads HLR. Positions 99, 136, and 174 each coordinate Zn(2+). Position 99 is an N6-carboxylysine (Lys99). His136 lines the substrate pocket. A substrate-binding site is contributed by Leu219. Position 247 (Asp247) interacts with Zn(2+). Asp247 is a catalytic residue. 2 residues coordinate substrate: His251 and Ala263.

The protein belongs to the metallo-dependent hydrolases superfamily. DHOase family. Class II DHOase subfamily. In terms of assembly, homodimer. The cofactor is Zn(2+).

It carries out the reaction (S)-dihydroorotate + H2O = N-carbamoyl-L-aspartate + H(+). It functions in the pathway pyrimidine metabolism; UMP biosynthesis via de novo pathway; (S)-dihydroorotate from bicarbonate: step 3/3. Catalyzes the reversible cyclization of carbamoyl aspartate to dihydroorotate. This is Dihydroorotase from Shewanella baltica (strain OS155 / ATCC BAA-1091).